The sequence spans 98 residues: Small ribosomal subunit protein eS24 (98 aa).

This sequence belongs to the eukaryotic ribosomal protein eS24 family. In terms of assembly, part of the 30S ribosomal subunit.

The protein is Small ribosomal subunit protein eS24 of Thermococcus kodakarensis (strain ATCC BAA-918 / JCM 12380 / KOD1) (Pyrococcus kodakaraensis (strain KOD1)).